The chain runs to 668 residues: DNA ligase (668 aa).

Residues 34-38 (DTEYD), 83-84 (SL), and E114 contribute to the NAD(+) site. The active-site N6-AMP-lysine intermediate is K116. The NAD(+) site is built by R137, E171, K286, and K310. Zn(2+) is bound by residues C404, C407, C422, and C427. The region spanning 588–668 (NSDSIIANKS…FFDLLKSEKG (81 aa)) is the BRCT domain.

The protein belongs to the NAD-dependent DNA ligase family. LigA subfamily. It depends on Mg(2+) as a cofactor. Mn(2+) serves as cofactor.

The enzyme catalyses NAD(+) + (deoxyribonucleotide)n-3'-hydroxyl + 5'-phospho-(deoxyribonucleotide)m = (deoxyribonucleotide)n+m + AMP + beta-nicotinamide D-nucleotide.. In terms of biological role, DNA ligase that catalyzes the formation of phosphodiester linkages between 5'-phosphoryl and 3'-hydroxyl groups in double-stranded DNA using NAD as a coenzyme and as the energy source for the reaction. It is essential for DNA replication and repair of damaged DNA. The sequence is that of DNA ligase from Mycoplasma mycoides subsp. mycoides SC (strain CCUG 32753 / NCTC 10114 / PG1).